We begin with the raw amino-acid sequence, 984 residues long: Probable beta-galactosidase C (984 aa).

The first 19 residues, 1-19 (MRLLNIFTTLCLLLWSGAA), serve as a signal peptide directing secretion. Residues Y78, N123, A124, E125, and N183 each coordinate substrate. E184 serves as the catalytic Proton donor. A substrate-binding site is contributed by Y247. The cysteines at positions 253 and 300 are disulfide-linked. N272 carries an N-linked (GlcNAc...) asparagine glycan. E283 (nucleophile) is an active-site residue. Position 349 (Y349) interacts with substrate. 11 N-linked (GlcNAc...) asparagine glycosylation sites follow: N387, N433, N462, N516, N583, N599, N673, N716, N756, N860, and N870.

It belongs to the glycosyl hydrolase 35 family.

Its subcellular location is the secreted. It carries out the reaction Hydrolysis of terminal non-reducing beta-D-galactose residues in beta-D-galactosides.. In terms of biological role, cleaves beta-linked terminal galactosyl residues from gangliosides, glycoproteins, and glycosaminoglycans. The sequence is that of Probable beta-galactosidase C (lacC) from Sclerotinia sclerotiorum (strain ATCC 18683 / 1980 / Ss-1) (White mold).